We begin with the raw amino-acid sequence, 216 residues long: U1 small nuclear ribonucleoprotein A (216 aa).

RRM domains lie at 7-86 (QTIY…YSKS) and 142-216 (QILF…FAKK). The tract at residues 97-142 (TFKERPKKVKPPKPAPGTDEKKDKKKKPSSAENSNPNAQTEQPPNQ) is disordered. Residues 126-142 (SAENSNPNAQTEQPPNQ) are compositionally biased toward polar residues.

It belongs to the RRM U1 A/B'' family. As to quaternary structure, belongs to the spliceosome where it is associated with snRNP U1. Interacts with the SMN complex.

Its subcellular location is the nucleus. Functionally, binds stem loop II of U1 snRNA. It is the first snRNP to interact with pre-mRNA. This interaction is required for the subsequent binding of U2 snRNP and the U4/U6/U5 tri-snRNP. Plays a role in regulating sex-lethal splicing. The polypeptide is U1 small nuclear ribonucleoprotein A (snf) (Drosophila melanogaster (Fruit fly)).